We begin with the raw amino-acid sequence, 358 residues long: Heme A synthase (358 aa).

8 helical membrane-spanning segments follow: residues 25-45 (LVRY…MVGG), 111-131 (LLAR…WLTG), 141-161 (MLGL…MVAS), 176-196 (IHLT…RGLV), 210-230 (FAGW…LVAG), 269-289 (VQFV…LHAV), 304-324 (TIVL…TLLM), and 326-346 (APLH…AFAV). His-273 is a heme binding site. His-334 is a heme binding site.

The protein belongs to the COX15/CtaA family. Type 2 subfamily. In terms of assembly, interacts with CtaB. Requires heme b as cofactor.

It is found in the cell membrane. The catalysed reaction is Fe(II)-heme o + 2 A + H2O = Fe(II)-heme a + 2 AH2. The protein operates within porphyrin-containing compound metabolism; heme A biosynthesis; heme A from heme O: step 1/1. Catalyzes the conversion of heme O to heme A by two successive hydroxylations of the methyl group at C8. The first hydroxylation forms heme I, the second hydroxylation results in an unstable dihydroxymethyl group, which spontaneously dehydrates, resulting in the formyl group of heme A. In Brucella suis (strain ATCC 23445 / NCTC 10510), this protein is Heme A synthase.